The sequence spans 224 residues: tRNA pseudouridine synthase B (224 aa).

Catalysis depends on aspartate 46, which acts as the Nucleophile.

The protein belongs to the pseudouridine synthase TruB family. Type 1 subfamily.

It carries out the reaction uridine(55) in tRNA = pseudouridine(55) in tRNA. Its function is as follows. Responsible for synthesis of pseudouridine from uracil-55 in the psi GC loop of transfer RNAs. The chain is tRNA pseudouridine synthase B from Methylococcus capsulatus (strain ATCC 33009 / NCIMB 11132 / Bath).